A 1363-amino-acid polypeptide reads, in one-letter code: Vascular endothelial growth factor receptor 3 (1363 aa).

The signal sequence occupies residues 1–24; it reads MQPGAALNRRLWLCLGLLQGLANG. The Extracellular portion of the chain corresponds to 25–775; the sequence is YSMTPPTLNI…EGSEDKGSME (751 aa). N-linked (GlcNAc...) asparagine glycans are attached at residues Asn33, Asn104, Asn166, Asn251, Asn299, and Asn411. Ig-like C2-type domains are found at residues 44–118, 151–213, 230–326, 331–415, 422–552, 555–671, and 678–764; these read GDSL…YIKA, KDSM…WGDQ, YDIQ…TEVI, PFIS…ISLE, PHIH…FYVT, PDGF…KYLS, and PRLT…ASVA. Intrachain disulfides connect Cys51–Cys111 and Cys158–Cys206. Cysteines 252 and 310 form a disulfide. 3 cysteine pairs are disulfide-bonded: Cys445/Cys534, Cys466/Cys486, and Cys578/Cys653. N-linked (GlcNAc...) asparagine glycosylation is found at Asn515, Asn527, Asn582, Asn594, and Asn683. Residues Cys699 and Cys751 are joined by a disulfide bond. Asn758 is a glycosylation site (N-linked (GlcNAc...) asparagine). Residues 776–796 form a helical membrane-spanning segment; it reads IVILIGTGVIAVFFWVLLLLI. The Cytoplasmic segment spans residues 797 to 1363; it reads FCNMKRPAHA…GSTFFADSNY (567 aa). A phosphotyrosine; by SRC mark is found at Tyr830 and Tyr833. The region spanning 845 to 1173 is the Protein kinase domain; that stretch reads LHLGRVLGHG…DLVEILGDLL (329 aa). Residues 851–859 and Lys879 contribute to the ATP site; that span reads LGHGAFGKV. The active-site Proton acceptor is Asp1037. Tyr1063 carries the phosphotyrosine; by autocatalysis and SRC modification. Residues Tyr1068, Tyr1230, Tyr1231, and Tyr1265 each carry the phosphotyrosine; by autocatalysis modification. Residues 1289 to 1317 are compositionally biased toward basic and acidic residues; the sequence is SRHRQEGSFSRKDPGQHMDISRGHPDLQG. A disordered region spans residues 1289-1330; that stretch reads SRHRQEGSFSRKDPGQHMDISRGHPDLQGRRRRPTQGAQGGK. Residues Tyr1333 and Tyr1337 each carry the phosphotyrosine; by autocatalysis and SRC modification. Tyr1363 is modified (phosphotyrosine; by autocatalysis).

This sequence belongs to the protein kinase superfamily. Tyr protein kinase family. CSF-1/PDGF receptor subfamily. In terms of assembly, interacts with VEGFC and VEGFD. Monomer in the absence of bound VEGFC or VEGFD. Homodimer in the presence of bound VEGFC or VEGFD. Can also form a heterodimer with KDR. Interacts with PTPN14; the interaction is enhanced by stimulation with VEGFC. Interacts with CRK, GRB2, PTK2/FAK1, SHC1, PIK3R1 and PTPN11/SHP-2. Identified in a complex with SRC and ITGB1. Identified in a complex with SRC and ITGB1. In terms of processing, autophosphorylated on tyrosine residues upon ligand binding. Autophosphorylation occurs in trans, i.e. one subunit of the dimeric receptor phosphorylates tyrosine residues on the other subunit. Phosphorylation in response to H(2)O(2) is mediated by a process that requires SRC and PRKCD activity. Phosphorylation at Tyr-1068 is required for autophosphorylation at additional tyrosine residues. Phosphorylation at Tyr-1063 and Tyr-1337 is important for interaction with CRK and subsequent activation of MAPK8. Phosphorylation at Tyr-1230, Tyr-1231 and Tyr-1337 is important for interaction with GRB2 and subsequent activation of the AKT1 and MAPK1/ERK2 and/or MAPK3/ERK1 signaling pathways. In response to endothelial cell adhesion onto collagen, can also be phosphorylated in the absence of FLT4 kinase activity by SRC.

The protein resides in the cell membrane. It localises to the cytoplasm. The protein localises to the nucleus. It carries out the reaction L-tyrosyl-[protein] + ATP = O-phospho-L-tyrosyl-[protein] + ADP + H(+). With respect to regulation, present in an inactive conformation in the absence of bound ligand. Binding of VEGFC or VEGFD leads to dimerization and activation by autophosphorylation on tyrosine residues. In terms of biological role, tyrosine-protein kinase that acts as a cell-surface receptor for VEGFC and VEGFD, and plays an essential role in adult lymphangiogenesis and in the development of the vascular network and the cardiovascular system during embryonic development. Promotes proliferation, survival and migration of endothelial cells, and regulates angiogenic sprouting. Signaling by activated FLT4 leads to enhanced production of VEGFC, and to a lesser degree VEGFA, thereby creating a positive feedback loop that enhances FLT4 signaling. Modulates KDR signaling by forming heterodimers. Mediates activation of the MAPK1/ERK2, MAPK3/ERK1 signaling pathway, of MAPK8 and the JUN signaling pathway, and of the AKT1 signaling pathway. Phosphorylates SHC1. Mediates phosphorylation of PIK3R1, the regulatory subunit of phosphatidylinositol 3-kinase. Promotes phosphorylation of MAPK8 at 'Thr-183' and 'Tyr-185', and of AKT1 at 'Ser-473'. This is Vascular endothelial growth factor receptor 3 (Flt4) from Rattus norvegicus (Rat).